Reading from the N-terminus, the 212-residue chain is Large ribosomal subunit protein uL3 (212 aa).

The tract at residues 134–155 (RNSHGNSLSHRAPGSIGQNQSP) is disordered. Glutamine 153 bears the N5-methylglutamine mark.

It belongs to the universal ribosomal protein uL3 family. In terms of assembly, part of the 50S ribosomal subunit. Forms a cluster with proteins L14 and L19. Methylated by PrmB.

Functionally, one of the primary rRNA binding proteins, it binds directly near the 3'-end of the 23S rRNA, where it nucleates assembly of the 50S subunit. This Pseudoalteromonas atlantica (strain T6c / ATCC BAA-1087) protein is Large ribosomal subunit protein uL3.